The following is a 308-amino-acid chain: Ribonuclease HIII (308 aa).

The region spanning 93–308 (MSVLGSDETG…ANTEKARKMI (216 aa)) is the RNase H type-2 domain. Positions 99, 100, and 204 each coordinate a divalent metal cation.

The protein belongs to the RNase HII family. RnhC subfamily. Mn(2+) serves as cofactor. Requires Mg(2+) as cofactor.

It localises to the cytoplasm. It carries out the reaction Endonucleolytic cleavage to 5'-phosphomonoester.. Endonuclease that specifically degrades the RNA of RNA-DNA hybrids. The chain is Ribonuclease HIII from Lysinibacillus sphaericus (strain C3-41).